The chain runs to 455 residues: Kynurenine 3-monooxygenase (455 aa).

It belongs to the aromatic-ring hydroxylase family. KMO subfamily. Requires FAD as cofactor.

It carries out the reaction L-kynurenine + NADPH + O2 + H(+) = 3-hydroxy-L-kynurenine + NADP(+) + H2O. It functions in the pathway cofactor biosynthesis; NAD(+) biosynthesis; quinolinate from L-kynurenine: step 1/3. Its function is as follows. Catalyzes the hydroxylation of L-kynurenine (L-Kyn) to form 3-hydroxy-L-kynurenine (L-3OHKyn). Required for synthesis of quinolinic acid. The polypeptide is Kynurenine 3-monooxygenase (Stenotrophomonas maltophilia (strain K279a)).